A 643-amino-acid chain; its full sequence is MSSHVPSFLRGTPDMTAHGGDGKSRNVAGLMLAAIGVVFGDIGTSPLYAMKETFSGPHAVAMDKGNILGVLSLVFWAITIIVSFKYVIIIMRADNRGEGGSLALLALVSHAAESNRRLSLMVSALGIFAAALFYGDSIITPAISVLSAVEGLQVAAPHLEQWVVPLTIVILFVLFAIQSHGTDLVGKMFGPVMLVWFLTLAILGIRNLSHAPSVLAALSPHYAISFLFREGWHAFLALGSVVLAVTGAEALYTDMGHFGRLPIRLAWYLLVLPALILNYFGQGALLIYNPEAIANPFFNLAPASLALPLVILATLATVIASQAVISGAFSVTRQAIQLGFLPRMEIIHTSEEEMGQIYLPFVNWLLMCMVMVLVVGFKTSSNLAAAYGVAVTGTMVIDALLVGTVMLLIWKWNPRKVKWLIGGFLVVDLAFFLANSIKIPDGGWFPLVVGGLLFTILTTWKDGRKRLLARLKADALPVEDFLASLSDRVPRVPGTAVFLTGTSEGVPIALLHNMKHNKIVHERVVLLTVIVEEVPFVPEERRLENRLLAPNFHRVFLRYGFMESPNIPKALAHARTDQLGFFYEPMSVSYFVSRETLLPTEKPGLRGLRDTLFATLARMATSAMDFFHLPSNRVVELGSQIEI.

Residues M1–G20 form a disordered region. 12 helical membrane passes run V27 to L47, V70 to I90, L120 to T140, P157 to I177, V185 to I205, G231 to L251, W267 to I287, L300 to A320, I357 to F377, V389 to I409, W419 to I439, and P440 to W460.

The protein belongs to the HAK/KUP transporter (TC 2.A.72) family.

It is found in the cell inner membrane. The enzyme catalyses K(+)(in) + H(+)(in) = K(+)(out) + H(+)(out). Its function is as follows. Transport of potassium into the cell. Likely operates as a K(+):H(+) symporter. The protein is Probable potassium transport system protein Kup 2 of Paramagnetospirillum magneticum (strain ATCC 700264 / AMB-1) (Magnetospirillum magneticum).